The following is a 538-amino-acid chain: Histone-arginine methyltransferase CARMER (538 aa).

In terms of domain architecture, SAM-dependent MTase PRMT-type spans 148-457 (ASQYFQFYGY…QSYDVTIDLH (310 aa)). S-adenosyl-L-methionine contacts are provided by Gln161, Arg170, Gly194, Glu216, Glu245, and Thr273. Arg508 is subject to Asymmetric dimethylarginine; by autocatalysis.

Belongs to the class I-like SAM-binding methyltransferase superfamily. Protein arginine N-methyltransferase family. Homodimer. The dimethylated protein is the major form.

Its subcellular location is the cytoplasm. The protein resides in the nucleus. The catalysed reaction is L-arginyl-[protein] + 2 S-adenosyl-L-methionine = N(omega),N(omega)-dimethyl-L-arginyl-[protein] + 2 S-adenosyl-L-homocysteine + 2 H(+). Methylates (mono- and asymmetric dimethylation) the guanidino nitrogens of arginyl residues in proteins. May methylate histone H3 at 'Arg-17' and activate transcription via chromatin remodeling. The polypeptide is Histone-arginine methyltransferase CARMER (Art4) (Drosophila virilis (Fruit fly)).